We begin with the raw amino-acid sequence, 179 residues long: Protein GrpE (179 aa).

Basic and acidic residues predominate over residues 1 to 14 (MSKKDKKEEIKEEV). Residues 1–40 (MSKKDKKEEIKEEVEATEPTTEESVEEVAEETSENKELQE) are disordered. Acidic residues predominate over residues 15–32 (EATEPTTEESVEEVAEET).

It belongs to the GrpE family. As to quaternary structure, homodimer.

The protein localises to the cytoplasm. Participates actively in the response to hyperosmotic and heat shock by preventing the aggregation of stress-denatured proteins, in association with DnaK and GrpE. It is the nucleotide exchange factor for DnaK and may function as a thermosensor. Unfolded proteins bind initially to DnaJ; upon interaction with the DnaJ-bound protein, DnaK hydrolyzes its bound ATP, resulting in the formation of a stable complex. GrpE releases ADP from DnaK; ATP binding to DnaK triggers the release of the substrate protein, thus completing the reaction cycle. Several rounds of ATP-dependent interactions between DnaJ, DnaK and GrpE are required for fully efficient folding. In Streptococcus mutans serotype c (strain ATCC 700610 / UA159), this protein is Protein GrpE.